A 904-amino-acid polypeptide reads, in one-letter code: NADH-quinone oxidoreductase subunit G (904 aa).

Residues 1–83 form the 2Fe-2S ferredoxin-type domain; that stretch reads MATIHVDGKE…GSWISIDDEE (83 aa). 4 residues coordinate [2Fe-2S] cluster: cysteine 34, cysteine 45, cysteine 48, and cysteine 67. The 4Fe-4S His(Cys)3-ligated-type domain maps to 83 to 122; that stretch reads EAKVFRASVVEWLMTNHPHDCPVCEEGGHCHLQDMTVMTG. Residues histidine 99, cysteine 103, cysteine 106, cysteine 112, cysteine 151, cysteine 154, cysteine 157, cysteine 201, cysteine 228, cysteine 231, cysteine 235, and cysteine 263 each contribute to the [4Fe-4S] cluster site. In terms of domain architecture, 4Fe-4S Mo/W bis-MGD-type spans 221–277; that stretch reads MQFSPSICHGCSSGCNISPGERYGELRRIENRFNGSVNQYFLCDRGRFGYGYVNRKD.

This sequence belongs to the complex I 75 kDa subunit family. Composed of 13 different subunits. Subunits NuoCD, E, F, and G constitute the peripheral sector of the complex. Requires [2Fe-2S] cluster as cofactor. It depends on [4Fe-4S] cluster as a cofactor.

The catalysed reaction is a quinone + NADH + 5 H(+)(in) = a quinol + NAD(+) + 4 H(+)(out). NDH-1 shuttles electrons from NADH, via FMN and iron-sulfur (Fe-S) centers, to quinones in the respiratory chain. The immediate electron acceptor for the enzyme in this species is believed to be ubiquinone. Couples the redox reaction to proton translocation (for every two electrons transferred, four hydrogen ions are translocated across the cytoplasmic membrane), and thus conserves the redox energy in a proton gradient. Required for plants roots colonization. The protein is NADH-quinone oxidoreductase subunit G (nuoG) of Pseudomonas fluorescens.